The primary structure comprises 118 residues: MTKNIHDVAYELQKAIAENEDFKTLKESYAAVQADAASKNLFDEFRTMQLSLQQKMMQGQEITEEDNQQAQEVVARIQQDAKITKLMETEQRLNVVIGDVNKIIMKPLEELYSAQQQA.

Belongs to the UPF0342 family.

This chain is UPF0342 protein BCG9842_B4422, found in Bacillus cereus (strain G9842).